An 87-amino-acid polypeptide reads, in one-letter code: uncharacterized protein (87 aa).

A disordered region spans residues 52–87 (KWQPRPDANNSDTTTSTEDSTTDTETEYSTTEDELA). Residues 71–87 (STTDTETEYSTTEDELA) show a composition bias toward acidic residues.

This is an uncharacterized protein from Autographa californica nuclear polyhedrosis virus (AcMNPV).